The chain runs to 398 residues: Putative FBD-associated F-box protein At5g56700 (398 aa).

In terms of domain architecture, F-box spans 1–47 (MAKISDLSDELLVKILSFLPTKEAVSTSCLSKQWEFLWMWLSKLEFY). The region spanning 340–388 (WKNNKSSVPKCLLESLETFEFAGYIGTPEERDFLSYIFKHARCLKSSSI) is the FBD domain.

This chain is Putative FBD-associated F-box protein At5g56700, found in Arabidopsis thaliana (Mouse-ear cress).